Consider the following 889-residue polypeptide: Serine/threonine-protein kinase D3 (889 aa).

A phosphoserine mark is found at Ser27, Ser37, Ser41, and Ser44. A Phorbol-ester/DAG-type 1 zinc finger spans residues 154–204; sequence PHALYVHSYKAPTFCDYCGEMLWGLVRQGLKCEGCGLNYHKRCAFKIPNNC. A phosphoserine mark is found at Ser213 and Ser216. A Phorbol-ester/DAG-type 2 zinc finger spans residues 271–321; that stretch reads PHTFAVHSYGRPTICQYCKRLLKGLFRQGMQCKDCKFNCHKRCASKVPRDC. A disordered region spans residues 336 to 370; the sequence is TDADMPMDIDSSDVNSDGSRGLDDSEEPSPPEDKM. Phosphoserine is present on residues Ser346, Ser391, and Ser395. The region spanning 416–532 is the PH domain; that stretch reads TVVKEGWMVH…WEKAIRQALM (117 aa). At Tyr426 the chain carries Phosphotyrosine. Ser442 is subject to Phosphoserine. Tyr457 carries the post-translational modification Phosphotyrosine. Position 535 is a phosphothreonine (Thr535). At Ser539 the chain carries Phosphoserine. A Protein kinase domain is found at 575-831; that stretch reads IFADEVLGSG…VDKSLSHPWL (257 aa). Residues 581 to 589 and Lys604 contribute to the ATP site; that span reads LGSGQFGIV. The Proton acceptor role is filled by Asp698. The residue at position 730 (Ser730) is a Phosphoserine; by PKC. Ser734 is modified (phosphoserine; by autocatalysis). Tyr741 carries the post-translational modification Phosphotyrosine.

Belongs to the protein kinase superfamily. CAMK Ser/Thr protein kinase family. PKD subfamily. Requires Mg(2+) as cofactor.

It localises to the cytoplasm. Its subcellular location is the membrane. The catalysed reaction is L-seryl-[protein] + ATP = O-phospho-L-seryl-[protein] + ADP + H(+). The enzyme catalyses L-threonyl-[protein] + ATP = O-phospho-L-threonyl-[protein] + ADP + H(+). With respect to regulation, activated by DAG and phorbol esters. Phorbol-ester/DAG-type domains 1 and 2 bind both DAG and phorbol ester with high affinity and mediate translocation to the cell membrane. Autophosphorylation of Ser-734 and phosphorylation of Ser-730 by PKC relieves auto-inhibition by the PH domain. Its function is as follows. Converts transient diacylglycerol (DAG) signals into prolonged physiological effects, downstream of PKC. Involved in resistance to oxidative stress. In Mus musculus (Mouse), this protein is Serine/threonine-protein kinase D3 (Prkd3).